A 919-amino-acid polypeptide reads, in one-letter code: Hexon protein (919 aa).

Ala2 bears the N-acetylalanine; by host mark. Tyr907 bears the Phosphotyrosine; by host mark.

Belongs to the adenoviridae hexon protein family. As to quaternary structure, homotrimer. Interacts with the capsid vertex protein; this interaction binds the peripentonal hexons to the neighboring penton base. Interacts with the hexon-linking protein; this interaction tethers the hexons surrounding the penton to those situated in the central plate of the facet. Interacts with the hexon-interlacing protein; this interaction lashes the hexons together. Interacts with host dyneins DYNC1LI1 and DYNC1I2; this interaction might be involved in intracellular microtubule-dependent transport of incoming viral capsid. Interacts with the shutoff protein; this interaction allows folding and formation of hexons trimers. Interacts with pre-protein VI; this interaction probably allows nuclear import of hexon trimers and possibly pre-capsid assembly.

It is found in the virion. It localises to the host nucleus. In terms of biological role, major capsid protein that self-associates to form 240 hexon trimers, each in the shape of a hexagon, building most of the pseudo T=25 capsid. Assembled into trimeric units with the help of the chaperone shutoff protein. Transported by pre-protein VI to the nucleus where it associates with other structural proteins to form an empty capsid. Might be involved, through its interaction with host dyneins, in the intracellular microtubule-dependent transport of incoming viral capsid to the nucleus. The chain is Hexon protein from Human adenovirus A serotype 12 (HAdV-12).